Here is a 239-residue protein sequence, read N- to C-terminus: Succinate dehydrogenase [ubiquinone] iron-sulfur subunit (239 aa).

The region spanning 24 to 99 is the 2Fe-2S ferredoxin-type domain; sequence AEAKFSVHPI…NANIITIYPL (76 aa). [2Fe-2S] cluster-binding residues include C63, C68, C71, and C83. The 4Fe-4S ferredoxin-type domain maps to 142–172; sequence DRSELNGIYECILCACCSASCPSYWWNHDKY. C152, C155, and C158 together coordinate [4Fe-4S] cluster. C162 contributes to the [3Fe-4S] cluster binding site. Position 167 (W167) interacts with a ubiquinone. Positions 209 and 215 each coordinate [3Fe-4S] cluster. A [4Fe-4S] cluster-binding site is contributed by C219.

Belongs to the succinate dehydrogenase/fumarate reductase iron-sulfur protein family. As to quaternary structure, component of complex II composed of four subunits: a flavoprotein (FP), an iron-sulfur protein (IP), and a cytochrome b composed of a large and a small subunit. [2Fe-2S] cluster serves as cofactor. Requires [3Fe-4S] cluster as cofactor. The cofactor is [4Fe-4S] cluster.

Its subcellular location is the mitochondrion inner membrane. It catalyses the reaction a quinone + succinate = fumarate + a quinol. The protein operates within carbohydrate metabolism; tricarboxylic acid cycle; fumarate from succinate (eukaryal route): step 1/1. In terms of biological role, iron-sulfur protein (IP) subunit of succinate dehydrogenase (SDH) that is involved in complex II of the mitochondrial electron transport chain and is responsible for transferring electrons from succinate to ubiquinone (coenzyme Q). This is Succinate dehydrogenase [ubiquinone] iron-sulfur subunit (SDH2) from Porphyra purpurea (Red seaweed).